We begin with the raw amino-acid sequence, 107 residues long: Iron-binding protein IscA (107 aa).

Residues Cys35, Cys99, and Cys101 each contribute to the Fe cation site.

The protein belongs to the HesB/IscA family. As to quaternary structure, homodimer; may form tetramers and higher multimers. Requires Fe cation as cofactor.

Is able to transfer iron-sulfur clusters to apo-ferredoxin. Multiple cycles of [2Fe2S] cluster formation and transfer are observed, suggesting that IscA acts catalytically. Recruits intracellular free iron so as to provide iron for the assembly of transient iron-sulfur cluster in IscU in the presence of IscS, L-cysteine and the thioredoxin reductase system TrxA/TrxB. In Yersinia enterocolitica serotype O:8 / biotype 1B (strain NCTC 13174 / 8081), this protein is Iron-binding protein IscA.